Reading from the N-terminus, the 848-residue chain is Protein NETWORKED 2C (848 aa).

Residues 10–90 form the NAB domain; sequence YSWWWASHVR…ERYDHISKEL (81 aa). The segment at 108–141 is disordered; that stretch reads FAMNEDDDDDAPVSPRHHKNKTSNKNVPKVPDLP. 4 coiled-coil regions span residues 172–204, 241–278, 305–454, and 752–797; these read LSKT…SYEN, EAQI…SRKQ, SEKE…KATN, and AKFE…SEEF.

This sequence belongs to the NET family.

Its function is as follows. Plant-specific actin binding protein. May be part of a membrane-cytoskeletal adapter complex. This chain is Protein NETWORKED 2C, found in Arabidopsis thaliana (Mouse-ear cress).